A 115-amino-acid chain; its full sequence is Large ribosomal subunit protein bL19 (115 aa).

Belongs to the bacterial ribosomal protein bL19 family.

Its function is as follows. This protein is located at the 30S-50S ribosomal subunit interface and may play a role in the structure and function of the aminoacyl-tRNA binding site. In Buchnera aphidicola subsp. Cinara cedri (strain Cc), this protein is Large ribosomal subunit protein bL19.